Consider the following 148-residue polypeptide: Snaclec 3 (148 aa).

The signal sequence occupies residues 1–23; that stretch reads WGDSSSSASACWSCSSPLSGTEA. Disulfide bonds link Cys-27/Cys-38, Cys-55/Cys-144, and Cys-121/Cys-136. Residues 34 to 145 form the C-type lectin domain; that stretch reads YDQNCYKAFE…CSGTHSFVCK (112 aa).

It belongs to the snaclec family. In terms of assembly, heterodimer; disulfide-linked. Expressed by the venom gland.

The protein localises to the secreted. Functionally, interferes with one step of hemostasis (modulation of platelet aggregation, or coagulation cascade, for example). In Echis carinatus sochureki (Saw-scaled viper), this protein is Snaclec 3.